Consider the following 464-residue polypeptide: Trehalose-6-phosphate synthase (464 aa).

D-glucose 6-phosphate is bound at residue Arg-10. Residue 23-24 (GG) coordinates UDP-alpha-D-glucose. Residues Tyr-81 and Asp-135 each contribute to the D-glucose 6-phosphate site. UDP-alpha-D-glucose is bound by residues Arg-268 and Lys-273. Position 306 (Arg-306) interacts with D-glucose 6-phosphate. 371–375 (LVAKE) contributes to the UDP-alpha-D-glucose binding site.

This sequence belongs to the glycosyltransferase 20 family. Homotetramer.

It carries out the reaction D-glucose 6-phosphate + UDP-alpha-D-glucose = alpha,alpha-trehalose 6-phosphate + UDP + H(+). The protein operates within glycan biosynthesis; trehalose biosynthesis. Functionally, probably involved in the osmoprotection via the biosynthesis of trehalose. Catalyzes the transfer of glucose from UDP-alpha-D-glucose (UDP-Glc) to D-glucose 6-phosphate (Glc-6-P) to form trehalose-6-phosphate. Acts with retention of the anomeric configuration of the UDP-sugar donor. This is Trehalose-6-phosphate synthase from Sinorhizobium fredii (strain NBRC 101917 / NGR234).